The primary structure comprises 578 residues: V-type ATP synthase alpha chain (578 aa).

Position 228–235 (228–235 (GPFGSGKT)) interacts with ATP.

The protein belongs to the ATPase alpha/beta chains family.

The enzyme catalyses ATP + H2O + 4 H(+)(in) = ADP + phosphate + 5 H(+)(out). In terms of biological role, produces ATP from ADP in the presence of a proton gradient across the membrane. The V-type alpha chain is a catalytic subunit. The polypeptide is V-type ATP synthase alpha chain (Thermus thermophilus (strain ATCC BAA-163 / DSM 7039 / HB27)).